A 790-amino-acid polypeptide reads, in one-letter code: Probable E3 ubiquitin-protein ligase MARCHF10 (790 aa).

Positions 33–240 (LKRQEHKKEP…PQNEPHTALS (208 aa)) are disordered. Basic and acidic residues predominate over residues 34–48 (KRQEHKKEPNEKKQE). Positions 61-70 (FSSGSSCKQS) are enriched in low complexity. S78 carries the post-translational modification Phosphoserine. Positions 218–227 (PLERQKKGDP) are enriched in basic and acidic residues. Positions 230 to 240 (RPQNEPHTALS) are enriched in polar residues. The stretch at 284–308 (LSLNNEQENYDTEEETRTEEELLLA) forms a coiled coil. Disordered regions lie at residues 323–416 (GTSA…EDVS) and 507–569 (LSPI…RHLQ). 3 stretches are compositionally biased toward polar residues: residues 355–370 (RKTSVTEPTTKQSSPG), 406–416 (GVTQVSAEDVS), and 511–520 (RNRNPSAASE). The segment covering 521–533 (SHSEDTQGEEERA) has biased composition (basic and acidic residues). Residues 534–563 (STSQAQESPLLSDLPNPQSSMALGDSPSSP) are compositionally biased toward polar residues. The segment at 633–703 (DSEEEGDLCR…EMCKQGLLVD (71 aa)) adopts an RING-CH-type zinc-finger fold. C641, C644, C659, C661, H669, C672, C693, and C696 together coordinate Zn(2+). The segment at 757–790 (ERMSRNYPQPRPEESESSESGDGNESNVYPGRVI) is disordered. The segment covering 774–783 (SESGDGNESN) has biased composition (low complexity).

The enzyme catalyses S-ubiquitinyl-[E2 ubiquitin-conjugating enzyme]-L-cysteine + [acceptor protein]-L-lysine = [E2 ubiquitin-conjugating enzyme]-L-cysteine + N(6)-ubiquitinyl-[acceptor protein]-L-lysine.. It participates in protein modification; protein ubiquitination. Functionally, E3 ubiquitin-protein ligase. E3 ubiquitin ligases accept ubiquitin from an E2 ubiquitin-conjugating enzyme in the form of a thioester and then directly transfer the ubiquitin to targeted substrates. The protein is Probable E3 ubiquitin-protein ligase MARCHF10 (Marchf10) of Rattus norvegicus (Rat).